The chain runs to 61 residues: uncharacterized protein (61 aa).

2 helical membrane passes run Phe-7–Phe-24 and Val-29–Leu-48.

It localises to the cell membrane. This is an uncharacterized protein from Bacillus subtilis (strain 168).